Reading from the N-terminus, the 61-residue chain is Beta-defensin 13 (61 aa).

The N-terminal stretch at 1 to 21 (MRLLYLLFAAVMLLFLQAVPA) is a signal peptide. Residues serine 24, arginine 40, histidine 44, asparagine 51, asparagine 53, glycine 54, histidine 58, and lysine 61 each coordinate a 1,2-diacyl-sn-glycero-3-phosphate. 3 cysteine pairs are disulfide-bonded: cysteine 31–cysteine 59, cysteine 38–cysteine 52, and cysteine 42–cysteine 60.

This sequence belongs to the beta-defensin family. In terms of assembly, monomeric. Forms multimeric, probably including tetrameric, complexes in the presence of phospholipid phosphatidic acid.

The protein resides in the secreted. Its function is as follows. Exhibits antimicrobial activity against fungi. Antimicrobial activity in a pH-dependent manner against the yeast C.albicans; activity is salt tolerant and retains antifungal activity in NaCl concentrations of 100mM. Permeabilizes C.albicans cell membranes via targeting plasma membrane phospholipid phosphatidic acid. This is Beta-defensin 13 from Crocodylus porosus (Saltwater crocodile).